Here is a 232-residue protein sequence, read N- to C-terminus: Lipoarabinomannan carrier protein LprG (232 aa).

The first 21 residues, 1–21 (MQTRLTAILAAFLTAVALLAG), serve as a signal peptide directing secretion. Cys-22 carries N-palmitoyl cysteine lipidation. Residue Cys-22 is the site of S-diacylglycerol cysteine attachment.

It belongs to the LppX/LprAFG lipoprotein family. Modified by Lgt on Cys-22 with an S-linked diacylglyceral, signal peptide is removed by LspA, Cys-22 is further modifed with a fatty acid on its amino group by Lnt yielding a triacylated protein.

The protein resides in the cell inner membrane. Its function is as follows. Helps membrane protein MHAS_02168/C731_2106 (P55) transport triacylglycerides (TAG) across the inner cell membrane into the periplasm and probably ultimately to the outer membrane. Binds TAG in its hydrophobic cavity and transfers it between lipid bilayers. TAG probably regulates lipid metabolism and growth regulation and plays a structural role in the outer membrane. Also binds mannosides, lipoarabinomannan and lipomannan and various glycolipids in the same cavity. The lprG-MHAS_02167/C731_2107 operon complements the vancomycin sensitivity of an M.smegmatis knockout of the same operon. In Mycolicibacterium hassiacum (strain DSM 44199 / CIP 105218 / JCM 12690 / 3849) (Mycobacterium hassiacum), this protein is Lipoarabinomannan carrier protein LprG.